The sequence spans 478 residues: 3-isopropylmalate dehydratase large subunit (478 aa).

C347, C407, and C410 together coordinate [4Fe-4S] cluster.

Belongs to the aconitase/IPM isomerase family. LeuC type 1 subfamily. In terms of assembly, heterodimer of LeuC and LeuD. [4Fe-4S] cluster serves as cofactor.

It carries out the reaction (2R,3S)-3-isopropylmalate = (2S)-2-isopropylmalate. It functions in the pathway amino-acid biosynthesis; L-leucine biosynthesis; L-leucine from 3-methyl-2-oxobutanoate: step 2/4. Functionally, catalyzes the isomerization between 2-isopropylmalate and 3-isopropylmalate, via the formation of 2-isopropylmaleate. The sequence is that of 3-isopropylmalate dehydratase large subunit from Prochlorococcus marinus (strain MIT 9313).